A 414-amino-acid polypeptide reads, in one-letter code: Serine/threonine transporter SstT (414 aa).

Over 2–15 (TTQRSPGLFRRLAH) the chain is Cytoplasmic. A helical transmembrane segment spans residues 16–36 (GSLVKQILVGLVLGILLAWIS). Residues 37 to 45 (KPAAEAVGL) are Periplasmic-facing. A helical transmembrane segment spans residues 46–66 (LGTLFVGALKAVAPILVLMLV). Residues 67–83 (MASIANHQHGQKTNIRP) lie on the Cytoplasmic side of the membrane. Residues 84 to 104 (ILFLYLLGTFSAALAAVVFSF) traverse the membrane as a helical segment. Residues 105–142 (AFPSTLHLSSSAGDISPPSGIVEVMRGLVMSMVSNPID) lie on the Periplasmic side of the membrane. A helical membrane pass occupies residues 143–163 (ALLKGNYIGILVWAIGLGFAL). Topologically, residues 164 to 179 (RHGNETTKNLVNDMSN) are cytoplasmic. The helical transmembrane segment at 180–200 (AVTFMVKLVIRFAPFGIFGLV) threads the bilayer. At 201–217 (SSTLATTGFSTLWGYAQ) the chain is on the periplasmic side. The helical transmembrane segment at 218–238 (LLVVLVGCMLLVALVVNPLLV) threads the bilayer. Residues 239–299 (WWKIRRNPFP…VSIPLGATIN (61 aa)) lie on the Cytoplasmic side of the membrane. Residues 300-320 (MAGAAITITVLTLAAVNTLGI) traverse the membrane as a helical segment. Over 321 to 331 (PVDLPTALLLS) the chain is Periplasmic. Residues 332-352 (VVASLCACGASGVAGGSLLLI) traverse the membrane as a helical segment. Residues 353 to 414 (PLACNMFGIS…DRLANSALRN (62 aa)) lie on the Cytoplasmic side of the membrane.

This sequence belongs to the dicarboxylate/amino acid:cation symporter (DAACS) (TC 2.A.23) family.

It is found in the cell inner membrane. It carries out the reaction L-serine(in) + Na(+)(in) = L-serine(out) + Na(+)(out). The catalysed reaction is L-threonine(in) + Na(+)(in) = L-threonine(out) + Na(+)(out). Functionally, involved in the import of serine and threonine into the cell, with the concomitant import of sodium (symport system). This is Serine/threonine transporter SstT from Shigella flexneri.